The following is a 416-amino-acid chain: Adenosylhomocysteinase (416 aa).

Substrate is bound by residues Thr-55, Asp-126, and Glu-151. 152–154 (TTT) provides a ligand contact to NAD(+). 2 residues coordinate substrate: Lys-181 and Asp-185. Residues Asn-186, 215–220 (GYGWVG), Glu-238, Asn-273, 294–296 (AGH), and Asn-341 each bind NAD(+).

The protein belongs to the adenosylhomocysteinase family. NAD(+) serves as cofactor.

It localises to the cytoplasm. The enzyme catalyses S-adenosyl-L-homocysteine + H2O = L-homocysteine + adenosine. The protein operates within amino-acid biosynthesis; L-homocysteine biosynthesis; L-homocysteine from S-adenosyl-L-homocysteine: step 1/1. Functionally, may play a key role in the regulation of the intracellular concentration of adenosylhomocysteine. In Aeropyrum pernix (strain ATCC 700893 / DSM 11879 / JCM 9820 / NBRC 100138 / K1), this protein is Adenosylhomocysteinase.